The following is a 270-amino-acid chain: Fibroblast growth factor 5 (270 aa).

The N-terminal stretch at 1–20 (MSLSFLLLLFLSHLILSAWA) is a signal peptide. The interval 25-86 (RLAPKGQPGP…EQSSFQWSPS (62 aa)) is disordered. A compositionally biased stretch (low complexity) spans 41 to 69 (PGGASSRRSSSSTATSSSSPASSSSAASR). Over residues 76-86 (LEQSSFQWSPS) the composition is skewed to polar residues. N112 is a glycosylation site (N-linked (GlcNAc...) asparagine). The tract at residues 237 to 257 (EKKKPPNPVKPKVPLSAPRRS) is disordered.

This sequence belongs to the heparin-binding growth factors family. Interacts with FGFR1 and FGFR2. Affinity between fibroblast growth factors (FGFs) and their receptors is increased by heparan sulfate glycosaminoglycans that function as coreceptors.

It is found in the secreted. Functionally, plays an important role in the regulation of cell proliferation and cell differentiation. Required for normal regulation of the hair growth cycle. Functions as an inhibitor of hair elongation by promoting progression from anagen, the growth phase of the hair follicle, into catagen the apoptosis-induced regression phase. This is Fibroblast growth factor 5 (FGF5) from Bos taurus (Bovine).